Here is a 283-residue protein sequence, read N- to C-terminus: Nucleotide-binding protein IL0393 (283 aa).

8–15 (GRSGSGKT) contacts ATP. 56–59 (DVRN) provides a ligand contact to GTP.

The protein belongs to the RapZ-like family.

Displays ATPase and GTPase activities. This is Nucleotide-binding protein IL0393 from Idiomarina loihiensis (strain ATCC BAA-735 / DSM 15497 / L2-TR).